The primary structure comprises 130 residues: Small ribosomal subunit protein uS9 (130 aa).

Belongs to the universal ribosomal protein uS9 family.

This is Small ribosomal subunit protein uS9 from Bordetella bronchiseptica (strain ATCC BAA-588 / NCTC 13252 / RB50) (Alcaligenes bronchisepticus).